Consider the following 554-residue polypeptide: CTP synthase (554 aa).

An amidoligase domain region spans residues 1–279; sequence MTSSRKVRPT…DTFIIRRLGL (279 aa). Serine 21 contacts CTP. Residue serine 21 participates in UTP binding. ATP is bound by residues 22–27 and aspartate 79; that span reads SLGKGL. Residues aspartate 79 and glutamate 153 each contribute to the Mg(2+) site. CTP-binding positions include 160–162, 200–205, and lysine 236; these read DIE and KTKPTQ. UTP contacts are provided by residues 200 to 205 and lysine 236; that span reads KTKPTQ. In terms of domain architecture, Glutamine amidotransferase type-1 spans 304–553; that stretch reads TVGIVGKYID…VKTALELRVH (250 aa). Glycine 367 is an L-glutamine binding site. Cysteine 394 (nucleophile; for glutamine hydrolysis) is an active-site residue. L-glutamine is bound by residues 395 to 398, glutamate 417, and arginine 478; that span reads LGLQ. Active-site residues include histidine 526 and glutamate 528.

This sequence belongs to the CTP synthase family. In terms of assembly, homotetramer.

The catalysed reaction is UTP + L-glutamine + ATP + H2O = CTP + L-glutamate + ADP + phosphate + 2 H(+). It catalyses the reaction L-glutamine + H2O = L-glutamate + NH4(+). The enzyme catalyses UTP + NH4(+) + ATP = CTP + ADP + phosphate + 2 H(+). Its pathway is pyrimidine metabolism; CTP biosynthesis via de novo pathway; CTP from UDP: step 2/2. Its activity is regulated as follows. Allosterically activated by GTP, when glutamine is the substrate; GTP has no effect on the reaction when ammonia is the substrate. The allosteric effector GTP functions by stabilizing the protein conformation that binds the tetrahedral intermediate(s) formed during glutamine hydrolysis. Inhibited by the product CTP, via allosteric rather than competitive inhibition. Functionally, catalyzes the ATP-dependent amination of UTP to CTP with either L-glutamine or ammonia as the source of nitrogen. Regulates intracellular CTP levels through interactions with the four ribonucleotide triphosphates. This is CTP synthase from Corynebacterium glutamicum (strain R).